The sequence spans 446 residues: Bifunctional protein GlmU (446 aa).

The segment at 1-228 is pyrophosphorylase; it reads MTKTAAVILA…AEELLGVNSR (228 aa). UDP-N-acetyl-alpha-D-glucosamine contacts are provided by residues 9–12, K23, Q72, 77–78, 100–102, G140, E154, N169, and N226; these read LAAG, GT, and YGD. D102 contributes to the Mg(2+) binding site. N226 provides a ligand contact to Mg(2+). Residues 229–249 are linker; that stretch reads SELAAAEAVIQGRLREKAMEG. The N-acetyltransferase stretch occupies residues 250 to 446; sequence GATLTAPETV…AHMRRLTGKN (197 aa). R315 and K333 together coordinate UDP-N-acetyl-alpha-D-glucosamine. Residue H345 is the Proton acceptor of the active site. Y348 and N359 together coordinate UDP-N-acetyl-alpha-D-glucosamine. Acetyl-CoA-binding positions include A362, 368-369, S387, A405, and R422; that span reads NY.

The protein in the N-terminal section; belongs to the N-acetylglucosamine-1-phosphate uridyltransferase family. This sequence in the C-terminal section; belongs to the transferase hexapeptide repeat family. As to quaternary structure, homotrimer. Requires Mg(2+) as cofactor.

The protein resides in the cytoplasm. The enzyme catalyses alpha-D-glucosamine 1-phosphate + acetyl-CoA = N-acetyl-alpha-D-glucosamine 1-phosphate + CoA + H(+). The catalysed reaction is N-acetyl-alpha-D-glucosamine 1-phosphate + UTP + H(+) = UDP-N-acetyl-alpha-D-glucosamine + diphosphate. The protein operates within nucleotide-sugar biosynthesis; UDP-N-acetyl-alpha-D-glucosamine biosynthesis; N-acetyl-alpha-D-glucosamine 1-phosphate from alpha-D-glucosamine 6-phosphate (route II): step 2/2. Its pathway is nucleotide-sugar biosynthesis; UDP-N-acetyl-alpha-D-glucosamine biosynthesis; UDP-N-acetyl-alpha-D-glucosamine from N-acetyl-alpha-D-glucosamine 1-phosphate: step 1/1. It functions in the pathway bacterial outer membrane biogenesis; LPS lipid A biosynthesis. Its function is as follows. Catalyzes the last two sequential reactions in the de novo biosynthetic pathway for UDP-N-acetylglucosamine (UDP-GlcNAc). The C-terminal domain catalyzes the transfer of acetyl group from acetyl coenzyme A to glucosamine-1-phosphate (GlcN-1-P) to produce N-acetylglucosamine-1-phosphate (GlcNAc-1-P), which is converted into UDP-GlcNAc by the transfer of uridine 5-monophosphate (from uridine 5-triphosphate), a reaction catalyzed by the N-terminal domain. In Rhodospirillum rubrum (strain ATCC 11170 / ATH 1.1.1 / DSM 467 / LMG 4362 / NCIMB 8255 / S1), this protein is Bifunctional protein GlmU.